Consider the following 404-residue polypeptide: UPF0261 protein CTC_01794 (404 aa).

The protein belongs to the UPF0261 family.

The chain is UPF0261 protein CTC_01794 from Clostridium tetani (strain Massachusetts / E88).